A 145-amino-acid chain; its full sequence is Large ribosomal subunit protein uL15 (145 aa).

Basic and acidic residues predominate over residues 1–18; the sequence is MKLHELKYTEGSKKDVTR. Residues 1–51 are disordered; that stretch reads MKLHELKYTEGSKKDVTRVGRGMASGKGKTSTRGHKGQNSRSGGGVRVGFE. The segment covering 42 to 51 has biased composition (gly residues); the sequence is SGGGVRVGFE.

The protein belongs to the universal ribosomal protein uL15 family. As to quaternary structure, part of the 50S ribosomal subunit.

In terms of biological role, binds to the 23S rRNA. This chain is Large ribosomal subunit protein uL15, found in Mesoplasma florum (strain ATCC 33453 / NBRC 100688 / NCTC 11704 / L1) (Acholeplasma florum).